The primary structure comprises 61 residues: Photosystem II reaction center protein K (61 aa).

The propeptide occupies 1–24 (MLNIFSLIWICLNSALYSSGFFFG). The helical transmembrane segment at 36–56 (IIDFMPVIPVFFFLLAFVWQA) threads the bilayer.

The protein belongs to the PsbK family. In terms of assembly, PSII is composed of 1 copy each of membrane proteins PsbA, PsbB, PsbC, PsbD, PsbE, PsbF, PsbH, PsbI, PsbJ, PsbK, PsbL, PsbM, PsbT, PsbX, PsbY, PsbZ, Psb30/Ycf12, at least 3 peripheral proteins of the oxygen-evolving complex and a large number of cofactors. It forms dimeric complexes.

The protein localises to the plastid. The protein resides in the chloroplast thylakoid membrane. Its function is as follows. One of the components of the core complex of photosystem II (PSII). PSII is a light-driven water:plastoquinone oxidoreductase that uses light energy to abstract electrons from H(2)O, generating O(2) and a proton gradient subsequently used for ATP formation. It consists of a core antenna complex that captures photons, and an electron transfer chain that converts photonic excitation into a charge separation. This chain is Photosystem II reaction center protein K, found in Coffea arabica (Arabian coffee).